Reading from the N-terminus, the 180-residue chain is Acireductone dioxygenase (180 aa).

Residues H88, H90, E94, and H133 each contribute to the Fe(2+) site. The Ni(2+) site is built by H88, H90, E94, and H133.

It belongs to the acireductone dioxygenase (ARD) family. As to quaternary structure, monomer. Interacts with MMP14. Fe(2+) is required as a cofactor. It depends on Ni(2+) as a cofactor.

The protein resides in the cytoplasm. It is found in the nucleus. Its subcellular location is the cell membrane. The enzyme catalyses 1,2-dihydroxy-5-(methylsulfanyl)pent-1-en-3-one + O2 = 4-methylsulfanyl-2-oxobutanoate + formate + 2 H(+). It carries out the reaction 1,2-dihydroxy-5-(methylsulfanyl)pent-1-en-3-one + O2 = 3-(methylsulfanyl)propanoate + CO + formate + 2 H(+). It participates in amino-acid biosynthesis; L-methionine biosynthesis via salvage pathway; L-methionine from S-methyl-5-thio-alpha-D-ribose 1-phosphate: step 5/6. In terms of biological role, catalyzes 2 different reactions between oxygen and the acireductone 1,2-dihydroxy-3-keto-5-methylthiopentene (DHK-MTPene) depending upon the metal bound in the active site. Fe-containing acireductone dioxygenase (Fe-ARD) produces formate and 2-keto-4-methylthiobutyrate (KMTB), the alpha-ketoacid precursor of methionine in the methionine recycle pathway. Ni-containing acireductone dioxygenase (Ni-ARD) produces methylthiopropionate, carbon monoxide and formate, and does not lie on the methionine recycle pathway. In Gallus gallus (Chicken), this protein is Acireductone dioxygenase.